We begin with the raw amino-acid sequence, 449 residues long: Ribulose bisphosphate carboxylase large chain (449 aa).

Lys-7 bears the N6,N6,N6-trimethyllysine mark. Residues Asn-116 and Thr-166 each contribute to the substrate site. The active-site Proton acceptor is the Lys-168. Substrate is bound at residue Lys-170. The Mg(2+) site is built by Lys-194, Asp-196, and Glu-197. Lys-194 is subject to N6-carboxylysine. The Proton acceptor role is filled by His-287. Residues Arg-288, His-320, and Ser-372 each coordinate substrate.

It belongs to the RuBisCO large chain family. Type I subfamily. As to quaternary structure, heterohexadecamer of 8 large chains and 8 small chains; disulfide-linked. The disulfide link is formed within the large subunit homodimers. It depends on Mg(2+) as a cofactor. Post-translationally, the disulfide bond which can form in the large chain dimeric partners within the hexadecamer appears to be associated with oxidative stress and protein turnover.

It is found in the plastid. Its subcellular location is the chloroplast. It carries out the reaction 2 (2R)-3-phosphoglycerate + 2 H(+) = D-ribulose 1,5-bisphosphate + CO2 + H2O. The catalysed reaction is D-ribulose 1,5-bisphosphate + O2 = 2-phosphoglycolate + (2R)-3-phosphoglycerate + 2 H(+). Functionally, ruBisCO catalyzes two reactions: the carboxylation of D-ribulose 1,5-bisphosphate, the primary event in carbon dioxide fixation, as well as the oxidative fragmentation of the pentose substrate in the photorespiration process. Both reactions occur simultaneously and in competition at the same active site. This chain is Ribulose bisphosphate carboxylase large chain, found in Aspidistra elatior (Cast-iron plant).